An 818-amino-acid chain; its full sequence is Phenylalanine--tRNA ligase beta subunit (818 aa).

A tRNA-binding domain is found at 39 to 148 (AAELQKFEVA…EDAVVGENFT (110 aa)). Residues 423-498 (PQKKPLDFSA…RIYGYDKIES (76 aa)) form the B5 domain. Positions 476, 482, 485, and 486 each coordinate Mg(2+). The FDX-ACB domain occupies 724–817 (SDFQANFRDY…IEQKFQGTLR (94 aa)).

It belongs to the phenylalanyl-tRNA synthetase beta subunit family. Type 1 subfamily. As to quaternary structure, tetramer of two alpha and two beta subunits. Mg(2+) serves as cofactor.

It localises to the cytoplasm. It catalyses the reaction tRNA(Phe) + L-phenylalanine + ATP = L-phenylalanyl-tRNA(Phe) + AMP + diphosphate + H(+). This Rickettsia felis (strain ATCC VR-1525 / URRWXCal2) (Rickettsia azadi) protein is Phenylalanine--tRNA ligase beta subunit.